The chain runs to 696 residues: Elongation factor G (696 aa).

Residues 8–290 (ERYRNIGIMA…AVLDYLPSPL (283 aa)) enclose the tr-type G domain. GTP-binding positions include 17–24 (AHIDAGKT), 88–92 (DTPGH), and 142–145 (NKMD).

It belongs to the TRAFAC class translation factor GTPase superfamily. Classic translation factor GTPase family. EF-G/EF-2 subfamily.

Its subcellular location is the cytoplasm. In terms of biological role, catalyzes the GTP-dependent ribosomal translocation step during translation elongation. During this step, the ribosome changes from the pre-translocational (PRE) to the post-translocational (POST) state as the newly formed A-site-bound peptidyl-tRNA and P-site-bound deacylated tRNA move to the P and E sites, respectively. Catalyzes the coordinated movement of the two tRNA molecules, the mRNA and conformational changes in the ribosome. The protein is Elongation factor G of Nitrosomonas europaea (strain ATCC 19718 / CIP 103999 / KCTC 2705 / NBRC 14298).